A 220-amino-acid chain; its full sequence is Octanoyltransferase (220 aa).

The BPL/LPL catalytic domain occupies 27-208; it reads PGTADEIWLC…QLARAHGHAV (182 aa). Substrate contacts are provided by residues 66–73, 139–141, and 152–154; these read RGGQVTYH, ALG, and GLA. The active-site Acyl-thioester intermediate is the Cys170.

It belongs to the LipB family.

It is found in the cytoplasm. It catalyses the reaction octanoyl-[ACP] + L-lysyl-[protein] = N(6)-octanoyl-L-lysyl-[protein] + holo-[ACP] + H(+). The protein operates within protein modification; protein lipoylation via endogenous pathway; protein N(6)-(lipoyl)lysine from octanoyl-[acyl-carrier-protein]: step 1/2. Functionally, catalyzes the transfer of endogenously produced octanoic acid from octanoyl-acyl-carrier-protein onto the lipoyl domains of lipoate-dependent enzymes. Lipoyl-ACP can also act as a substrate although octanoyl-ACP is likely to be the physiological substrate. This Bordetella parapertussis (strain 12822 / ATCC BAA-587 / NCTC 13253) protein is Octanoyltransferase.